The primary structure comprises 249 residues: Thrombin-like enzyme barnettobin (249 aa).

The first 10 residues, 1 to 10, serve as a signal peptide directing secretion; the sequence is APKELQVSYA. The propeptide occupies 11–16; the sequence is HKSSEL. The region spanning 17–240 is the Peptidase S1 domain; the sequence is VIGGDECDIN…YPPWIQSIIA (224 aa). 6 cysteine pairs are disulfide-bonded: Cys23-Cys154, Cys41-Cys57, Cys89-Cys247, Cys133-Cys201, Cys165-Cys180, and Cys191-Cys216. Residues His56 and Asp101 each act as charge relay system in the active site. N-linked (GlcNAc...) asparagine glycans are attached at residues Asn145 and Asn161. Ser195 (charge relay system) is an active-site residue. An N-linked (GlcNAc...) asparagine glycan is attached at Asn242.

The protein belongs to the peptidase S1 family. Snake venom subfamily. Monomer. In terms of processing, glycoprotein, contains approx. 52% carbohydrate which could be removed by N-glycosidase. Glycosylation is important, since deglycosylated barnettobin loses its clotting and defibrinogenating effects. Expressed by the venom gland.

It localises to the secreted. With respect to regulation, both coagulant and amidolytic activities are inhibited by PMSF. Amidolytic activity is partially inhibited by DTT, chymostatin, SBTI and TLCK, but not by heparin and EDTA. In terms of biological role, thrombin-like snake venom serine protease that releases only fibrinopeptide A from human Aalpha chain of fibrinogen (specific coagulant activity was 251.7 NIH thrombin units/mg). Also shows fibrino(geno)lytic activities in vitro and defibrinogenating effects in vivo. This Bothrops barnetti (Barnett's lancehead) protein is Thrombin-like enzyme barnettobin.